A 58-amino-acid chain; its full sequence is Protein YecU (58 aa).

This chain is Protein YecU, found in Escherichia coli (strain K12).